Consider the following 830-residue polypeptide: Vacuolar protein sorting-associated protein 11 homolog (830 aa).

The RING-type; atypical zinc-finger motif lies at 733-775 (CDICREMLSMQSIYFLCQHSFHEECLNYKSTKRQEKFLCIICK).

It belongs to the VPS11 family. As to quaternary structure, part of the homotypic fusion and vacuole protein sorting (HOPS) complex, composed of Vps16A, car/Vps33A, dor/Vps18, Vps39, Vps11 and lt/Vps41. Unlike in other species, not part of the class C core vacuole/endosome tethering (CORVET) complex.

The protein resides in the late endosome membrane. The protein localises to the lysosome membrane. In terms of biological role, part of the homotypic fusion and vacuole protein sorting (HOPS) tethering complex involved in endo-lysosomal vesicle trafficking and lysosome biogenesis, but unlike in many other species does not form part of the class C core vacuole/endosome tethering (CORVET) complex. The HOPS complex facilitates docking and fusion of lysosomes with late endosomes and several other types of vesicles. The HOPS complex is also involved in autophagy, pigment granule biogenesis and crinophagy (the elimination of unused secretory granules through fusion with lysosomes). The HOPS complex probably instigates autophagosome-lysosome fusion by binding autophagosome-associated Syx17/syntaxin 17 and promoting assembly of the trans-SNARE complex. Independent of Syx17/syntaxin 17, HOPS is involved in biosynthetic transport to lysosomes and lysosome-related organelles such as eye-pigment granules. Required for autophagocytosis-dependent remodeling of myofibrils and transverse-tubules (T-tubules) during metamorphosis. The chain is Vacuolar protein sorting-associated protein 11 homolog from Drosophila melanogaster (Fruit fly).